The following is a 282-amino-acid chain: Formamidopyrimidine-DNA glycosylase (282 aa).

The active-site Schiff-base intermediate with DNA is the proline 2. Catalysis depends on glutamate 3, which acts as the Proton donor. Lysine 60 serves as the catalytic Proton donor; for beta-elimination activity. Residues histidine 99, arginine 118, and arginine 163 each coordinate DNA. An FPG-type zinc finger spans residues 248–282 (WVYGRTGEPCRVCGTSIERLKLGGRSAHFCPRCQA). Arginine 272 functions as the Proton donor; for delta-elimination activity in the catalytic mechanism.

The protein belongs to the FPG family. In terms of assembly, monomer. Requires Zn(2+) as cofactor.

It carries out the reaction Hydrolysis of DNA containing ring-opened 7-methylguanine residues, releasing 2,6-diamino-4-hydroxy-5-(N-methyl)formamidopyrimidine.. The enzyme catalyses 2'-deoxyribonucleotide-(2'-deoxyribose 5'-phosphate)-2'-deoxyribonucleotide-DNA = a 3'-end 2'-deoxyribonucleotide-(2,3-dehydro-2,3-deoxyribose 5'-phosphate)-DNA + a 5'-end 5'-phospho-2'-deoxyribonucleoside-DNA + H(+). In terms of biological role, involved in base excision repair of DNA damaged by oxidation or by mutagenic agents. Acts as a DNA glycosylase that recognizes and removes damaged bases. Has a preference for oxidized purines, such as 7,8-dihydro-8-oxoguanine (8-oxoG). Has AP (apurinic/apyrimidinic) lyase activity and introduces nicks in the DNA strand. Cleaves the DNA backbone by beta-delta elimination to generate a single-strand break at the site of the removed base with both 3'- and 5'-phosphates. The sequence is that of Formamidopyrimidine-DNA glycosylase from Rippkaea orientalis (strain PCC 8801 / RF-1) (Cyanothece sp. (strain PCC 8801)).